A 666-amino-acid chain; its full sequence is MTGSIVKTEDISSISGRGDTSQSPEEVEESLRLIEDLKFFLATAPANWQENQVIRRYYLSNDEGFVSCVFWNNLYYITGTDIVRCCAYRMQKFGREIVERKKFEEGIFSDLRNLKCGIDATLEKPKSDLLAFLYKNMCLKTQKKQKVFFWFSVPHDRLFADALERDLKRSSTGSQPTTRAVSEPALSFRWEANSDVSLYDQITNHVDSQRTDSRPSTVGAQDVTQKQNNRVTDTPVSASKDVEPFESNVVEDEVQIVDNNKMCYGLPHSESNNYVPQQLIVPQSDLERNELTNEFDELNADLKPSDILTSNQEDDDFPLDYFPVEIEYSQTSMDSSLHMASQGAKHPSQMMFYEDMDGMMLGPKYPISAGIYEDPFFREEMAASNASKYMMPPPMSATRAHFMTNGEYYSKSREGKKHGKSGRQHGPDDGRRDYDNENVGSSPSENQNPNEELDATENNQDADDNRSPDIYPPTDAMANDEYIPAYNRRMQMSESLVHPYTGMMLNPYMFCNMLAVDPSLNMGVNPVVDPFYGQNHSMDVAHDVYSPQEVVYPSNYRSTPKAAYFNMRSPYGRNFPPPSAMNPYYTPYHRRQPSSATRRYFSKANLINRKSKSPPRKNVVSKPSHKAPKKVNRTRHATSMHVGLGGKDSGNTSSESRDDSTKEDSN.

The segment covering 1–24 has biased composition (polar residues); the sequence is MTGSIVKTEDISSISGRGDTSQSP. The disordered stretch occupies residues 1–25; sequence MTGSIVKTEDISSISGRGDTSQSPE. Residues 51-161 mediate DNA binding; the sequence is NQVIRRYYLS…SVPHDRLFAD (111 aa). Disordered regions lie at residues 205-245, 409-477, and 605-666; these read HVDS…VEPF, YSKS…TDAM, and NLIN…EDSN. The segment covering 214-237 has biased composition (polar residues); it reads RPSTVGAQDVTQKQNNRVTDTPVS. A compositionally biased stretch (basic residues) spans 414 to 423; that stretch reads EGKKHGKSGR. The span at 425-435 shows a compositional bias: basic and acidic residues; sequence HGPDDGRRDYD. Positions 438-450 are enriched in polar residues; that stretch reads NVGSSPSENQNPN. Over residues 623–638 the composition is skewed to basic residues; the sequence is PSHKAPKKVNRTRHAT. The segment covering 655-666 has biased composition (basic and acidic residues); that stretch reads ESRDDSTKEDSN.

It belongs to the STE12 transcription factor family. Post-translationally, phosphorylated by the STE7 and STE11 kinases.

The protein resides in the nucleus. Functionally, binds to the DNA sequence mediating pheromone induction (called the pheromone response element = PRE) which is found in the upstream control region of several a-, alpha- and haploid-specific genes. Involved in the mating process. The polypeptide is Protein STE12 (STE12) (Kluyveromyces lactis (strain ATCC 8585 / CBS 2359 / DSM 70799 / NBRC 1267 / NRRL Y-1140 / WM37) (Yeast)).